We begin with the raw amino-acid sequence, 56 residues long: Mitoregulin (56 aa).

Topologically, residues 2-9 (ADVSERTL) are mitochondrial matrix. Residues 10 to 27 (QLSVLVAFASGVLLGWQA) form a helical membrane-spanning segment. Residues 28-56 (NRLRRRYLDWRKRRLQDKLAATQKKLDLA) lie on the Mitochondrial intermembrane side of the membrane.

As to quaternary structure, interacts with mitochondrial trifunctional enzyme, a heterotetrameric complex composed of 2 HADHA subunits and 2 HADHB subunits. Interacts with cytochrome b5 reductase CYB5R3; the interaction is required to maintain cellular lipid composition and leads to stimulation of mitochondrial respiratory complex I activity. Interacts with ATP synthase subunit ATP5F1B/ATP5B.

The protein resides in the mitochondrion inner membrane. Its function is as follows. Positively regulates mitochondrial complex assembly and/or stability. Increases mitochondrial membrane potential while decreasing mitochondrial reactive oxygen species. Increases mitochondrial respiration rate. Increased mitochondrial respiratory activity promotes myogenic differentiation which facilitates muscle growth and regeneration. Increases mitochondrial calcium retention capacity. Plays a role in maintenance of cellular lipid composition through its interaction with cytochrome b5 reductase CYB5R3 which is required for mitochondrial respiratory complex I activity. Interacts with the mitochondrial trifunctional enzyme complex (MTE) and enhances fatty acid beta-oxidation. Not required for MTE formation or stability. Modulates triglyceride clearance in adipocytes through its role in regulating fatty acid beta-oxidation and lipolysis. In Homo sapiens (Human), this protein is Mitoregulin.